A 345-amino-acid chain; its full sequence is Phosphoribosylformylglycinamidine cyclo-ligase (345 aa).

It belongs to the AIR synthase family.

The protein resides in the cytoplasm. It catalyses the reaction 2-formamido-N(1)-(5-O-phospho-beta-D-ribosyl)acetamidine + ATP = 5-amino-1-(5-phospho-beta-D-ribosyl)imidazole + ADP + phosphate + H(+). The protein operates within purine metabolism; IMP biosynthesis via de novo pathway; 5-amino-1-(5-phospho-D-ribosyl)imidazole from N(2)-formyl-N(1)-(5-phospho-D-ribosyl)glycinamide: step 2/2. The protein is Phosphoribosylformylglycinamidine cyclo-ligase of Prochlorococcus marinus (strain MIT 9211).